Consider the following 126-residue polypeptide: uncharacterized protein (126 aa).

The chain crosses the membrane as a helical span at residues 3–23; sequence NMIVLIIFAAFIIYMIASYVY. The region spanning 39 to 123 is the Rhodanese domain; that stretch reads GYRKAQLIDV…GFKKWGGKIK (85 aa).

The protein localises to the cell membrane. This is an uncharacterized protein from Bacillus subtilis (strain 168).